Consider the following 129-residue polypeptide: M-zodatoxin-Lt8a (129 aa).

Residues 1–20 (MKYFVVALALVAAFACIAES) form the signal peptide. The propeptide occupies 21-60 (KPAESEHELAEVEEENELADLEDAVWLEHLADLSDLEEAR). Positions 57–60 (EEAR) match the Processing quadruplet motif motif.

The protein belongs to the cationic peptide 06 (cytoinsectotoxin) family. Cleavage of the propeptide depends on the processing quadruplet motif (XXXR, with at least one of X being E). In terms of tissue distribution, expressed by the venom gland.

Its subcellular location is the secreted. In terms of biological role, insecticidal, cytolytic and antimicrobial peptide. Has insecticidal activity against the flesh fly S.carnaria, and against the cockroach N.cinerea. Has insecticidal activity against D.melanogaster. Has hemolytic activity against human erythrocytes (EC(50)=6 uM). Has cytolytic activity against insect Sf9 cells (EC(50)=1 uM) and human leukocytes (EC(50)=3 uM). Has antibacterial activity against the Gram-positive bacteria A.globiformis VKM Ac-1112 (MIC=0.5 uM), and B.subtilis VKM B-501 (MIC=0.6-0.9 uM), and against the Gram-negative bacteria E.coli C600 (MIC=0.5 uM), E.coli DH5alpha (MIC=0.9 uM), E.coli MH1 (MIC=0.5 uM), P.aeruginosa PAO1 (MIC=1.9 uM), and P.fluorescens VKM B-894 (MIC=3.8 uM). Lacks antimicrobial activity against the Gram-positive bacteria M.luteus and S.aureus, and against the Gram-negative bacterium S.marcescens. Forms voltage-dependent, ion-permeable channels in membranes. At high concentration causes cell membrane lysis. In Lachesana tarabaevi (Spider), this protein is M-zodatoxin-Lt8a (cit 1-1).